Consider the following 953-residue polypeptide: Translation initiation factor IF-2 (953 aa).

Disordered stretches follow at residues 51–242 (SKAS…QEAK) and 279–363 (TKLK…TERK). Basic and acidic residues-rich tracts occupy residues 80–89 (TGSEHVEKTQ) and 98–111 (FKAEREARAKEQAA). The span at 131–140 (QPNNHQTNEQ) shows a compositional bias: polar residues. Basic and acidic residues predominate over residues 149–188 (SQGDTNDKRIERKASNVSPRHDNHQLVGDRNRSFAKENHK). The segment covering 191–207 (RFTNQKKQGRQEPQSKS) has biased composition (polar residues). A compositionally biased stretch (basic and acidic residues) spans 229–242 (RQSETRFRAQQEAK). Polar residues predominate over residues 282-291 (KSSNISAKST). Positions 300-317 (ARPEKNRELTHHSQEGQK) are enriched in basic and acidic residues. Positions 322–338 (SWNSQNQVRNQKNSNWN) are enriched in low complexity. The span at 339-348 (KNKKTKKGKN) shows a compositional bias: basic residues. A tr-type G domain is found at 454–623 (ERAPVVTIMG…LLVAEVEELK (170 aa)). The tract at residues 463-470 (GHVDHGKT) is G1. A GTP-binding site is contributed by 463-470 (GHVDHGKT). The interval 488 to 492 (GITQH) is G2. The G3 stretch occupies residues 509-512 (DTPG). GTP contacts are provided by residues 509-513 (DTPGH) and 563-566 (NKID). Residues 563-566 (NKID) are G4. The tract at residues 599-601 (SAK) is G5.

Belongs to the TRAFAC class translation factor GTPase superfamily. Classic translation factor GTPase family. IF-2 subfamily.

It is found in the cytoplasm. Functionally, one of the essential components for the initiation of protein synthesis. Protects formylmethionyl-tRNA from spontaneous hydrolysis and promotes its binding to the 30S ribosomal subunits. Also involved in the hydrolysis of GTP during the formation of the 70S ribosomal complex. The sequence is that of Translation initiation factor IF-2 from Streptococcus pyogenes serotype M49 (strain NZ131).